A 929-amino-acid chain; its full sequence is Bifunctional uridylyltransferase/uridylyl-removing enzyme (929 aa).

A uridylyltransferase region spans residues 1–379 (MSPSRPAADE…RPAAKRRRVP (379 aa)). Residues 380–735 (ESDDFVIDNN…VGFDEARAVT (356 aa)) are uridylyl-removing. The region spanning 495–618 (VDEHLIRCVG…VETVEQMKML (124 aa)) is the HD domain. ACT domains are found at residues 736 to 818 (ELTI…AVAR) and 849 to 929 (VIEV…KPAA).

It belongs to the GlnD family. It depends on Mg(2+) as a cofactor.

It catalyses the reaction [protein-PII]-L-tyrosine + UTP = [protein-PII]-uridylyl-L-tyrosine + diphosphate. The enzyme catalyses [protein-PII]-uridylyl-L-tyrosine + H2O = [protein-PII]-L-tyrosine + UMP + H(+). Its activity is regulated as follows. Uridylyltransferase (UTase) activity is inhibited by glutamine, while glutamine activates uridylyl-removing (UR) activity. In terms of biological role, modifies, by uridylylation and deuridylylation, the PII regulatory proteins (GlnB and homologs), in response to the nitrogen status of the cell that GlnD senses through the glutamine level. Under low glutamine levels, catalyzes the conversion of the PII proteins and UTP to PII-UMP and PPi, while under higher glutamine levels, GlnD hydrolyzes PII-UMP to PII and UMP (deuridylylation). Thus, controls uridylylation state and activity of the PII proteins, and plays an important role in the regulation of nitrogen fixation and metabolism. The sequence is that of Bifunctional uridylyltransferase/uridylyl-removing enzyme from Rhodopseudomonas palustris (strain ATCC BAA-98 / CGA009).